A 627-amino-acid chain; its full sequence is Carnitine O-acetyltransferase (627 aa).

Positions 1 to 30 are excised as a propeptide; the sequence is MDRKQKQAEKARPYGLLKPAALGKIPGRFQ. N6-succinyllysine is present on K94. The residue at position 262 (K262) is an N6-acetyllysine; alternate. N6-succinyllysine; alternate is present on K262. An N6-acetyllysine modification is found at K269. The active-site Proton acceptor is the H344. Residues K420 and 424–431 each bind CoA; that span reads KSEKISPD. (R)-carnitine-binding residues include Y453 and S455. S457 lines the CoA pocket. (R)-carnitine is bound at residue T466. Q556 lines the CoA pocket. The Microbody targeting signal signature appears at 625–627; sequence SKL.

The protein belongs to the carnitine/choline acetyltransferase family. As to quaternary structure, monomer.

The protein resides in the endoplasmic reticulum. Its subcellular location is the peroxisome. It is found in the mitochondrion inner membrane. The enzyme catalyses (R)-carnitine + acetyl-CoA = O-acetyl-(R)-carnitine + CoA. It catalyses the reaction propanoyl-CoA + (R)-carnitine = O-propanoyl-(R)-carnitine + CoA. It carries out the reaction butanoyl-CoA + (R)-carnitine = O-butanoyl-(R)-carnitine + CoA. The catalysed reaction is hexanoyl-CoA + (R)-carnitine = O-hexanoyl-(R)-carnitine + CoA. The enzyme catalyses octanoyl-CoA + (R)-carnitine = O-octanoyl-(R)-carnitine + CoA. It catalyses the reaction decanoyl-CoA + (R)-carnitine = O-decanoyl-(R)-carnitine + CoA. It carries out the reaction 3-methylbutanoyl-CoA + (R)-carnitine = O-3-methylbutanoyl-(R)-carnitine + CoA. The catalysed reaction is 2-methylpropanoyl-CoA + (R)-carnitine = O-isobutanoyl-(R)-carnitine + CoA. The enzyme catalyses 2-methylbutanoyl-CoA + (R)-carnitine = O-2-methylbutanoyl-(R)-carnitine + CoA. It catalyses the reaction acetoacetyl-CoA + (R)-carnitine = O-3-oxobutanoyl-(R)-carnitine + CoA. It carries out the reaction 3-hydroxybutanoyl-CoA + (R)-carnitine = O-3-hydroxybutanoyl-(R)-carnitine + CoA. The catalysed reaction is 4,8-dimethylnonanoyl-CoA + (R)-carnitine = O-4,8-dimethylnonanoyl-(R)-carnitine + CoA. The enzyme catalyses 2,6-dimethylheptanoyl-CoA + (R)-carnitine = O-2,6-dimethylheptanoyl-(R)-carnitine + CoA. Its function is as follows. Catalyzes the reversible transfer of acyl groups from carnitine to coenzyme A (CoA) and regulates the acyl-CoA/CoA ratio. Also plays a crucial role in the transport of fatty acids for beta-oxidation. Responsible for the synthesis of short- and branched-chain acylcarnitines. Active towards some branched-chain amino acid oxidation pathway (BCAAO) intermediates. Trans-2-enoyl-CoAs and 2-methylacyl-CoAs are poor substrates. In Columba livia (Rock dove), this protein is Carnitine O-acetyltransferase (CRAT).